The chain runs to 375 residues: Phosphoribulokinase, chloroplastic (375 aa).

The transit peptide at methionine 1–alanine 31 directs the protein to the chloroplast. Cysteines 47 and 86 form a disulfide.

The protein belongs to the phosphoribulokinase family. As to quaternary structure, component of a complex that contains two dimers of PRK, two tetramers of GAPDH and CP12.

It is found in the plastid. The protein localises to the chloroplast. It catalyses the reaction D-ribulose 5-phosphate + ATP = D-ribulose 1,5-bisphosphate + ADP + H(+). It functions in the pathway carbohydrate biosynthesis; Calvin cycle. With respect to regulation, light regulated via thioredoxin by reversible oxidation/reduction of sulfhydryl/disulfide groups. The protein is Phosphoribulokinase, chloroplastic (PRKA) of Chlamydomonas reinhardtii (Chlamydomonas smithii).